The chain runs to 104 residues: Large ribosomal subunit protein uL24 (104 aa).

Belongs to the universal ribosomal protein uL24 family. Part of the 50S ribosomal subunit.

Functionally, one of two assembly initiator proteins, it binds directly to the 5'-end of the 23S rRNA, where it nucleates assembly of the 50S subunit. One of the proteins that surrounds the polypeptide exit tunnel on the outside of the subunit. This Methylorubrum extorquens (strain PA1) (Methylobacterium extorquens) protein is Large ribosomal subunit protein uL24.